A 301-amino-acid polypeptide reads, in one-letter code: Diaminopimelate epimerase (301 aa).

The substrate site is built by Asn-15, Gln-47, and Asn-67. Residue Cys-76 is the Proton donor of the active site. Substrate is bound by residues Gly-77–Asn-78, Asn-163, Asn-197, and Glu-215–Arg-216. Cys-224 functions as the Proton acceptor in the catalytic mechanism. Gly-225–Ser-226 provides a ligand contact to substrate. Positions Ser-280–Arg-301 are disordered.

The protein belongs to the diaminopimelate epimerase family. As to quaternary structure, homodimer.

Its subcellular location is the cytoplasm. It carries out the reaction (2S,6S)-2,6-diaminopimelate = meso-2,6-diaminopimelate. It participates in amino-acid biosynthesis; L-lysine biosynthesis via DAP pathway; DL-2,6-diaminopimelate from LL-2,6-diaminopimelate: step 1/1. In terms of biological role, catalyzes the stereoinversion of LL-2,6-diaminopimelate (L,L-DAP) to meso-diaminopimelate (meso-DAP), a precursor of L-lysine and an essential component of the bacterial peptidoglycan. This is Diaminopimelate epimerase from Rhizobium leguminosarum bv. trifolii (strain WSM2304).